Here is a 643-residue protein sequence, read N- to C-terminus: Fructose-1,6-bisphosphatase class 3 (643 aa).

This sequence belongs to the FBPase class 3 family. It depends on Mn(2+) as a cofactor.

The enzyme catalyses beta-D-fructose 1,6-bisphosphate + H2O = beta-D-fructose 6-phosphate + phosphate. It functions in the pathway carbohydrate biosynthesis; gluconeogenesis. This is Fructose-1,6-bisphosphatase class 3 from Streptococcus agalactiae serotype Ia (strain ATCC 27591 / A909 / CDC SS700).